Consider the following 193-residue polypeptide: Achaete-scute homolog 2 (193 aa).

Disordered regions lie at residues 1 to 58 (MDSR…RNER) and 128 to 177 (PLPR…GALS). The bHLH domain occupies 50 to 102 (AAVARRNERERNRVKLVNLGFQALRQHVPHGGASKKLSKVETLRSAVEYIRAL). The segment covering 128 to 152 (PLPRAPSGTPATAASPSCASSSPGR) has biased composition (low complexity).

As to quaternary structure, efficient DNA binding requires dimerization with another basic helix-loop-helix (bHLH) protein. Forms heterodimers with bHLH transcription factor TCF3. May not heterodimerise with bHLH protein HAND1. In terms of tissue distribution, expressed in placenta.

It is found in the nucleus. Transcription factor. Binds to E-box motifs 5'-CANNTG-3' in the regulatory elements of target genes, probably as a heterodimer with another basic helix-loop-helix (bHLH) protein such as the transcription factor TCF3. May bind both open and closed chromatin, acting as a pioneer transcription factor to allow other factors to bind and activate lineage-specific genes. Required during post-implantation development for the generation of some differentiated trophoblast cell types. Transcriptional activity of ASCL2 may be antagonised in a subset of trophoblast cells by bHLH transcription factor HAND1, perhaps by competing for dimerization with other bHLH proteins. Involved in differentiation and function of follicular T-helper (Tfh) cells, thereby playing a role in germinal center responses; probably modulates expression of genes involved in Tfh cell function, such as BCL6. May also act as a suppressor of Th1-, Th2- and Th17-cell differentiation. Induces the formation of stem cells in intestinal crypts in vitro, synergistically activating transcription of target genes, such as SOX9, together with TCF4/beta-catenin. May form a bistable transcriptional switch, controlling expression of its own gene together with Wnt/R-spondin signaling, and thereby maintaining stem cell characteristics. Modulates expression of target genes, including perhaps down-regulating EGR1/Krox24 and chemokine CXCL10/Mob-1 and up-regulating CXCR4 and CDKN1C/p57kip2, in Schwann cells. May play a role in reducing proliferation of Schwann cells, perhaps acting via modulation of expression of CDKN1C. May be dispensable for blastocyst formation and later embryonic function. May be involved in the determination of neuronal precursors. This chain is Achaete-scute homolog 2 (ASCL2), found in Bos taurus (Bovine).